A 184-amino-acid polypeptide reads, in one-letter code: MAVFVLVMILLAMAGHSSGTWCVCKEGLSEAMLQKTLDYACGAGADCGPIHQTGPCFNPNTVKSHCSYAVNSFFQKKGQSLGTCDFAGTATFSASDPSYTTCPFPASASGSGTTTPVTTTPSTRVPTTTNTRPYTITPSTGGGLGIPSGINPDYTDPSFGFKLQSPRFGFIVLFTLFLPFYLFS.

A signal peptide spans 1–19; that stretch reads MAVFVLVMILLAMAGHSSG. A disulfide bond links Cys22 and Cys84. The disordered stretch occupies residues 109 to 146; it reads SGSGTTTPVTTTPSTRVPTTTNTRPYTITPSTGGGLGI. Positions 113–139 are enriched in low complexity; it reads TTTPVTTTPSTRVPTTTNTRPYTITPS. The GPI-anchor amidated serine moiety is linked to residue Ser158. The propeptide at 159–184 is removed in mature form; it reads FGFKLQSPRFGFIVLFTLFLPFYLFS.

Post-translationally, contains two additional disulfide bonds. Expressed in the shoot apical region and in young leaves but also detected in the laminar and vasculature of mature leaves.

It localises to the cell membrane. Its subcellular location is the cell junction. The protein resides in the plasmodesma. This is PLASMODESMATA CALLOSE-BINDING PROTEIN 3 (PDCB3) from Arabidopsis thaliana (Mouse-ear cress).